The sequence spans 321 residues: Beta-ketoacyl-[acyl-carrier-protein] synthase III (321 aa).

Residues C113 and H246 contribute to the active site. Residues 247–251 (QANVR) are ACP-binding. N276 is an active-site residue.

Belongs to the thiolase-like superfamily. FabH family. Homodimer.

The protein resides in the cytoplasm. It catalyses the reaction malonyl-[ACP] + acetyl-CoA + H(+) = 3-oxobutanoyl-[ACP] + CO2 + CoA. It functions in the pathway lipid metabolism; fatty acid biosynthesis. In terms of biological role, catalyzes the condensation reaction of fatty acid synthesis by the addition to an acyl acceptor of two carbons from malonyl-ACP. Catalyzes the first condensation reaction which initiates fatty acid synthesis and may therefore play a role in governing the total rate of fatty acid production. Possesses both acetoacetyl-ACP synthase and acetyl transacylase activities. Its substrate specificity determines the biosynthesis of branched-chain and/or straight-chain of fatty acids. This Enterococcus faecalis (strain ATCC 700802 / V583) protein is Beta-ketoacyl-[acyl-carrier-protein] synthase III.